Here is a 957-residue protein sequence, read N- to C-terminus: SLIT and NTRK-like protein 5 (957 aa).

The N-terminal stretch at 1–40 (MHVCCPPVTLEQDLHRKMHSWMLQTLAFAVTSLVLSCAET) is a signal peptide. The Extracellular portion of the chain corresponds to 41–664 (IDYYGEICDN…GTGASSVPLS (624 aa)). LRR repeat units lie at residues 82 to 103 (PIYH…EFVN), 106 to 127 (GASI…AFHG), 130 to 151 (GLRR…TFLG), 154 to 175 (NLEY…AFGK), 178 to 199 (MLQV…LFRF), and 201 to 222 (PLTH…GLLQ). N-linked (GlcNAc...) asparagine glycosylation occurs at N103. One can recognise an LRRCT 1 domain in the interval 235 to 286 (NPWNCSCELISLKDWLDSISYSALVGDVVCETPFRLHGRDLDEVSKQELCPR). Positions 317–358 (ATSSSAVYKPPLKPPKGTRQPNKPRVRPTSRQPSKDLGYSNY) are disordered. The region spanning 365–407 (QTKSPVPLECPTACTCNLQISDLGLNVNCQERKIESIAELQPK) is the LRRNT domain. 6 LRR repeats span residues 410 to 431 (NPKK…DFLE), 434 to 455 (GLDL…AFGD), 458 to 479 (NLRR…LFYG), 482 to 503 (SLQY…TFDP), 506 to 527 (NLQL…VFSG), and 529 to 550 (TLLR…GVLD). An LRRCT 2 domain is found at 563–614 (NPWDCTCDVVGMKLWIEQLKVGVLVDEVICKAPKKFAETYMRSIKSELLCPD). A compositionally biased stretch (low complexity) spans 623–632 (PTPSSIQVPS). The segment at 623–642 (PTPSSIQVPSRTNAATPAVR) is disordered. The N-linked (GlcNAc...) asparagine glycan is linked to N644. The chain crosses the membrane as a helical span at residues 665–685 (VLILSLLLVFIMSVFVAAGLF). The Cytoplasmic segment spans residues 686–957 (VLVMKRRKKN…LEKQTTFSQF (272 aa)). The interval 789-844 (SNHHLQQQPPPPPQQPQQQPPPQMQMQPGEEERRESHHLRSPAYSVSTIEPREDLL) is disordered. Residues 796–811 (QPPPPPQQPQQQPPPQ) are compositionally biased toward pro residues.

Belongs to the SLITRK family. In terms of tissue distribution, in the adult, significant expression is detected only in the brain. In the embryo, expressed in the subventricular zone, cortical plate, pyramidal layer of hippocampus, thalamus and hypothalamus.

It localises to the membrane. In terms of biological role, suppresses neurite outgrowth. The chain is SLIT and NTRK-like protein 5 (Slitrk5) from Mus musculus (Mouse).